Reading from the N-terminus, the 161-residue chain is Alpha-crystallin A chain (161 aa).

The interval 1–51 (ALGPFYPSRXXXXXXXXXXXXXXXXXXXXXXXXXXXXQSLFRTVLDSGISE) is required for complex formation with BFSP1 and BFSP2. Gln38 bears the Deamidated glutamine; partial mark. The sHSP domain maps to 40-150 (LFRTVLDSGI…SHSERAIPVS (111 aa)). Lys87 is modified (N6-acetyllysine). Position 88 (His88) interacts with Zn(2+). Asn89 is subject to Deamidated asparagine; partial. Zn(2+) is bound by residues Glu90 and His95. The residue at position 110 (Ser110) is a Phosphoserine. Asn111 is subject to Deamidated asparagine; partial. Residues Cys119 and Cys130 are joined by a disulfide bond. Gln135 is modified (deamidated glutamine; partial). The tract at residues 140-161 (ASHSERAIPVSREEKPSSAPSS) is disordered. The segment covering 141–155 (SHSERAIPVSREEKP) has biased composition (basic and acidic residues). His142 provides a ligand contact to Zn(2+). O-linked (GlcNAc) serine glycosylation occurs at Ser150.

Belongs to the small heat shock protein (HSP20) family. In terms of assembly, heteromer composed of three CRYAA and one CRYAB subunits. Inter-subunit bridging via zinc ions enhances stability, which is crucial as there is no protein turn over in the lens. Can also form homodimers and homotetramers (dimers of dimers) which serve as the building blocks of homooligomers. Within homooligomers, the zinc-binding motif is created from residues of 3 different molecules. His-88 and Glu-90 from one molecule are ligands of the zinc ion, and His-95 and His-142 residues from additional molecules complete the site with tetrahedral coordination geometry. Part of a complex required for lens intermediate filament formation composed of BFSP1, BFSP2 and CRYAA. Undergoes age-dependent proteolytical cleavage at the C-terminus.

The protein resides in the cytoplasm. Its subcellular location is the nucleus. Its function is as follows. Contributes to the transparency and refractive index of the lens. In its oxidized form (absence of intramolecular disulfide bond), acts as a chaperone, preventing aggregation of various proteins under a wide range of stress conditions. Required for the correct formation of lens intermediate filaments as part of a complex composed of BFSP1, BFSP2 and CRYAA. This chain is Alpha-crystallin A chain (CRYAA), found in Galegeeska rufescens (East African rufous sengi).